The sequence spans 427 residues: Trigger factor (427 aa).

A PPIase FKBP-type domain is found at 163–248 (GDTVVIDFVG…IHEVKTKEVP (86 aa)).

It belongs to the FKBP-type PPIase family. Tig subfamily.

It is found in the cytoplasm. It catalyses the reaction [protein]-peptidylproline (omega=180) = [protein]-peptidylproline (omega=0). Involved in protein export. Acts as a chaperone by maintaining the newly synthesized protein in an open conformation. Functions as a peptidyl-prolyl cis-trans isomerase. In Streptococcus pyogenes serotype M1, this protein is Trigger factor (tig).